Here is a 210-residue protein sequence, read N- to C-terminus: Thymidylate kinase (210 aa).

11–18 (GLEGAGKS) is a binding site for ATP.

It belongs to the thymidylate kinase family.

It catalyses the reaction dTMP + ATP = dTDP + ADP. Functionally, phosphorylation of dTMP to form dTDP in both de novo and salvage pathways of dTTP synthesis. The protein is Thymidylate kinase of Vibrio parahaemolyticus serotype O3:K6 (strain RIMD 2210633).